A 337-amino-acid chain; its full sequence is Holliday junction branch migration complex subunit RuvB (337 aa).

The segment at 4–186 (ADRLIAADNP…FGIVQRLEYY (183 aa)) is large ATPase domain (RuvB-L). Residues Ile-25, Arg-26, Gly-67, Lys-70, Thr-71, Thr-72, 133–135 (EDY), Arg-176, Tyr-186, and Arg-223 contribute to the ATP site. Mg(2+) is bound at residue Thr-71. The segment at 187–257 (KVEDLQHIVQ…IADKALNMLD (71 aa)) is small ATPAse domain (RuvB-S). Residues 260–337 (VRGFDYMDRK…LHFGIDKPDK (78 aa)) form a head domain (RuvB-H) region. 3 residues coordinate DNA: Arg-296, Arg-315, and Arg-320.

The protein belongs to the RuvB family. In terms of assembly, homohexamer. Forms an RuvA(8)-RuvB(12)-Holliday junction (HJ) complex. HJ DNA is sandwiched between 2 RuvA tetramers; dsDNA enters through RuvA and exits via RuvB. An RuvB hexamer assembles on each DNA strand where it exits the tetramer. Each RuvB hexamer is contacted by two RuvA subunits (via domain III) on 2 adjacent RuvB subunits; this complex drives branch migration. In the full resolvosome a probable DNA-RuvA(4)-RuvB(12)-RuvC(2) complex forms which resolves the HJ.

It localises to the cytoplasm. It carries out the reaction ATP + H2O = ADP + phosphate + H(+). Functionally, the RuvA-RuvB-RuvC complex processes Holliday junction (HJ) DNA during genetic recombination and DNA repair, while the RuvA-RuvB complex plays an important role in the rescue of blocked DNA replication forks via replication fork reversal (RFR). RuvA specifically binds to HJ cruciform DNA, conferring on it an open structure. The RuvB hexamer acts as an ATP-dependent pump, pulling dsDNA into and through the RuvAB complex. RuvB forms 2 homohexamers on either side of HJ DNA bound by 1 or 2 RuvA tetramers; 4 subunits per hexamer contact DNA at a time. Coordinated motions by a converter formed by DNA-disengaged RuvB subunits stimulates ATP hydrolysis and nucleotide exchange. Immobilization of the converter enables RuvB to convert the ATP-contained energy into a lever motion, pulling 2 nucleotides of DNA out of the RuvA tetramer per ATP hydrolyzed, thus driving DNA branch migration. The RuvB motors rotate together with the DNA substrate, which together with the progressing nucleotide cycle form the mechanistic basis for DNA recombination by continuous HJ branch migration. Branch migration allows RuvC to scan DNA until it finds its consensus sequence, where it cleaves and resolves cruciform DNA. In Aliivibrio fischeri (strain ATCC 700601 / ES114) (Vibrio fischeri), this protein is Holliday junction branch migration complex subunit RuvB.